The chain runs to 651 residues: LEAF RUST 10 DISEASE-RESISTANCE LOCUS RECEPTOR-LIKE PROTEIN KINASE-like 1.2 (651 aa).

A signal peptide spans Met-1 to Ser-26. The Extracellular portion of the chain corresponds to Leu-27–Lys-264. N-linked (GlcNAc...) asparagine glycans are attached at residues Asn-88, Asn-114, Asn-130, Asn-136, Asn-155, Asn-193, and Asn-213. A helical transmembrane segment spans residues Val-265–Val-285. At Tyr-286–Lys-651 the chain is on the cytoplasmic side. The region spanning Phe-341–Leu-613 is the Protein kinase domain. ATP-binding positions include Leu-347–Val-355 and Lys-369. At Tyr-415 the chain carries Phosphotyrosine. Residue Asp-465 is the Proton acceptor of the active site. Ser-498 carries the post-translational modification Phosphoserine. A phosphothreonine mark is found at Thr-499 and Thr-504. A Phosphotyrosine modification is found at Tyr-512.

The protein belongs to the protein kinase superfamily. Ser/Thr protein kinase family.

The protein localises to the cell membrane. Its subcellular location is the membrane. The enzyme catalyses L-seryl-[protein] + ATP = O-phospho-L-seryl-[protein] + ADP + H(+). It catalyses the reaction L-threonyl-[protein] + ATP = O-phospho-L-threonyl-[protein] + ADP + H(+). In terms of biological role, probable receptor-like serine/threonine-protein kinase involved in abscisic acid (ABA) signaling. Acts as a positive regulator of abiotic stress response. This Arabidopsis thaliana (Mouse-ear cress) protein is LEAF RUST 10 DISEASE-RESISTANCE LOCUS RECEPTOR-LIKE PROTEIN KINASE-like 1.2.